The chain runs to 641 residues: Methylenetetrahydrofolate reductase 2 (641 aa).

The active-site Proton donor/acceptor is the Glu20. NAD(+) is bound by residues 20-25 and 52-53; these read EYFPPK and TW. FAD is bound by residues 52-53, His81, 111-113, Tyr153, Asp172, and Lys179; these read TW and RGD. A substrate-binding site is contributed by Asp113. Residue Gln190 coordinates substrate.

The protein belongs to the methylenetetrahydrofolate reductase family. Requires FAD as cofactor.

The catalysed reaction is (6S)-5-methyl-5,6,7,8-tetrahydrofolate + NADP(+) = (6R)-5,10-methylene-5,6,7,8-tetrahydrofolate + NADPH + H(+). It participates in one-carbon metabolism; tetrahydrofolate interconversion. Its function is as follows. Major methylenetetrahydrofolate reductase required to generate the methyl groups necessary for methionine synthetase to convert homocysteine to methionine. Performs 15 to 20 percent of the total methylenetetrahydrofolate reductase activity of the cells. The protein is Methylenetetrahydrofolate reductase 2 (met11) of Schizosaccharomyces pombe (strain 972 / ATCC 24843) (Fission yeast).